The following is a 984-amino-acid chain: Vacuolar sorting protein 3 (984 aa).

The 319-residue stretch at 21–339 (KIRALSLSPI…GCGPSLLAAD (319 aa)) folds into the CNH domain. One copy of the CHCR repeat lies at 663–844 (VLTSDKRTEE…YLDPQNGKEP (182 aa)).

Belongs to the TRAP1 family. As to quaternary structure, component of the class C core vacuole/endosome tethering (CORVET) complex. Their common core is composed of the class C Vps core proteins VPS11, VCL1, VPS18 and VPS33, which in CORVET further associates with VPS3. Interacts directly with VPS11. Binds to RABF2A and RABF2B.

The protein resides in the endosome membrane. It localises to the cytoplasm. Its function is as follows. Essential protein required during embryogenesis. Believed to act as a component of the putative class C core vacuole/endosome tethering (CORVET) endosomal tethering complexes. CORVET is required for vacuolar transport of SYP22. Involved in root development. Plays a role in vesicle-mediated protein trafficking of the endocytic membrane transport pathway. The chain is Vacuolar sorting protein 3 from Arabidopsis thaliana (Mouse-ear cress).